Here is a 159-residue protein sequence, read N- to C-terminus: Na(+)/H(+) antiporter subunit E1 (159 aa).

Helical transmembrane passes span 1–21, 27–47, 49–69, and 101–121; these read MAVQ…VTNS, FVLG…VLPG, FYVI…IELI, and WQIV…VLGV.

The protein belongs to the CPA3 antiporters (TC 2.A.63) subunit E family. As to quaternary structure, may form a heterooligomeric complex that consists of seven subunits: mnhA1, mnhB1, mnhC1, mnhD1, mnhE1, mnhF1 and mnhG1.

It localises to the cell membrane. In terms of biological role, mnh complex is a Na(+)/H(+) antiporter involved in Na(+) excretion. This chain is Na(+)/H(+) antiporter subunit E1 (mnhE1), found in Staphylococcus aureus (strain bovine RF122 / ET3-1).